The chain runs to 166 residues: UPF0304 protein VIBHAR_01542 (166 aa).

Belongs to the UPF0304 family.

The sequence is that of UPF0304 protein VIBHAR_01542 from Vibrio campbellii (strain ATCC BAA-1116).